The primary structure comprises 403 residues: Phosphopentomutase (403 aa).

6 residues coordinate Mn(2+): D13, D298, H303, D339, H340, and H351.

It belongs to the phosphopentomutase family. Mn(2+) serves as cofactor.

Its subcellular location is the cytoplasm. The catalysed reaction is 2-deoxy-alpha-D-ribose 1-phosphate = 2-deoxy-D-ribose 5-phosphate. The enzyme catalyses alpha-D-ribose 1-phosphate = D-ribose 5-phosphate. Its pathway is carbohydrate degradation; 2-deoxy-D-ribose 1-phosphate degradation; D-glyceraldehyde 3-phosphate and acetaldehyde from 2-deoxy-alpha-D-ribose 1-phosphate: step 1/2. Functionally, isomerase that catalyzes the conversion of deoxy-ribose 1-phosphate (dRib-1-P) and ribose 1-phosphate (Rib-1-P) to deoxy-ribose 5-phosphate (dRib-5-P) and ribose 5-phosphate (Rib-5-P), respectively. The sequence is that of Phosphopentomutase from Streptococcus pyogenes serotype M28 (strain MGAS6180).